A 100-amino-acid polypeptide reads, in one-letter code: Integration host factor subunit alpha (100 aa).

The protein belongs to the bacterial histone-like protein family. As to quaternary structure, heterodimer of an alpha and a beta chain.

This protein is one of the two subunits of integration host factor, a specific DNA-binding protein that functions in genetic recombination as well as in transcriptional and translational control. The protein is Integration host factor subunit alpha of Jannaschia sp. (strain CCS1).